Here is a 634-residue protein sequence, read N- to C-terminus: BTB/POZ domain-containing protein At1g03010 (634 aa).

The region spanning 38-103 (SDLTVQVGSS…CYGINIEINL (66 aa)) is the BTB domain. In terms of domain architecture, NPH3 spans 205–503 (DWWGKSLAVL…VQVLYFEQIR (299 aa)). Phosphotyrosine is present on Tyr444. A coiled-coil region spans residues 542-580 (RDNYASVRRENRELKLEVARMRMRLTDLEKDHISIKQEL).

It belongs to the NPH3 family.

The protein operates within protein modification; protein ubiquitination. May act as a substrate-specific adapter of an E3 ubiquitin-protein ligase complex (CUL3-RBX1-BTB) which mediates the ubiquitination and subsequent proteasomal degradation of target proteins. The chain is BTB/POZ domain-containing protein At1g03010 from Arabidopsis thaliana (Mouse-ear cress).